The chain runs to 425 residues: Glutamyl-tRNA reductase (425 aa).

Residues 49-52 (TCNR), S106, 111-113 (EPQ), and Q117 contribute to the substrate site. The active-site Nucleophile is the C50. 186–191 (GAGETI) lines the NADP(+) pocket.

The protein belongs to the glutamyl-tRNA reductase family. In terms of assembly, homodimer.

It carries out the reaction (S)-4-amino-5-oxopentanoate + tRNA(Glu) + NADP(+) = L-glutamyl-tRNA(Glu) + NADPH + H(+). The protein operates within porphyrin-containing compound metabolism; protoporphyrin-IX biosynthesis; 5-aminolevulinate from L-glutamyl-tRNA(Glu): step 1/2. In terms of biological role, catalyzes the NADPH-dependent reduction of glutamyl-tRNA(Glu) to glutamate 1-semialdehyde (GSA). This chain is Glutamyl-tRNA reductase, found in Saccharophagus degradans (strain 2-40 / ATCC 43961 / DSM 17024).